We begin with the raw amino-acid sequence, 1275 residues long: Histone-lysine N-methyltransferase PRDM16 (1275 aa).

Residues 1–10 (MRSKARARKL) show a composition bias toward basic residues. A disordered region spans residues 1–66 (MRSKARARKL…SEDFTPKEGS (66 aa)). In terms of domain architecture, SET spans 82-211 (PDFELRESSI…PGEELLVHVK (130 aa)). A C2H2-type 1; degenerate zinc finger spans residues 230–255 (FRCDECDELFQCRLDLRRHKKYACSS). 5 C2H2-type zinc fingers span residues 282 to 304 (HECKDCERMFPNKYSLEQHMIVH), 310 to 332 (YKCDQCPKAFNWKSNLIRHQMSH), 338 to 361 (FECENCVKVFTDPSNLQRHIRSQH), 367 to 389 (HACPDCGKTFATSSGLKQHKHIH), and 395 to 417 (FICEVCHKSYTQFSNLCRHKRMH). The C2H2-type 7; atypical zinc finger occupies 424 to 446 (IKCKDCGQMFSTTSSLNKHRRFC). Disordered regions lie at residues 592–658 (VKNR…VPPG) and 789–838 (APKV…GVSE). Positions 610 to 625 (TTTGTDLDTTTGTGSD) are enriched in low complexity. 2 stretches are compositionally biased toward basic and acidic residues: residues 631–648 (DSDRDKGKDKGKPVESKP) and 821–835 (REPRKNHVYGERKPG). Residues 680–1038 (EEQLLTASGA…KHEHEGAPVS (359 aa)) form an interaction with CTBP1, CTBP2 and ZNF516 region. A mediates interaction with SKI and regulation of TGF-beta signaling region spans residues 740–1275 (PFTDRALAHN…SGAFNPINHL (536 aa)). C2H2-type zinc fingers lie at residues 951-973 (YTCRYCGKIFPRSANLTRHLRTH), 979-1002 (YRCKYCDRSFSISSNLQRHVRNIH), and 1008-1030 (FKCHLCNRCFGQQTNLDRHLKKH). Disordered regions lie at residues 1027 to 1065 (LKKHEHEGAPVSQHSGVLTNHLGTSASSPTSESDNHALL) and 1084 to 1169 (EMNQ…MGFD). Positions 1038-1058 (SQHSGVLTNHLGTSASSPTSE) are enriched in polar residues. The segment covering 1117–1133 (DVEEEEEEELEEEDDDS) has biased composition (acidic residues).

It belongs to the PRDM16 family. Interacts with CEBPA, CEBPB and CEBPD; the interaction is direct. Interacts with PPARG and PPARA; controls brown adipocytes. Interacts with CTBP1 and CTBP2; represses the expression of WAT-specific genes. Interacts with PPARGC1A and PPARGC1B; interaction with PPARGC1A or PPARGC1B activates the transcription of BAT-specific gene. Interacts with HDAC1, SKI and SMAD2; the interaction with SKI promotes the recruitment of SMAD3-HDAC1 complex on the promoter of TGF-beta target genes. Interacts with ZNF516; the interaction is direct and may play a role in the transcription of brown adipose tissue-specific gene. Enriched in BAT compared to WAT. Detected in heart, lung, kidney and brain. Expressed in nuclei of cardiomyocytes.

The protein resides in the nucleus. It is found in the cytoplasm. The catalysed reaction is L-lysyl(9)-[histone H3] + S-adenosyl-L-methionine = N(6)-methyl-L-lysyl(9)-[histone H3] + S-adenosyl-L-homocysteine + H(+). Its function is as follows. Binds DNA and functions as a transcriptional regulator. Displays histone methyltransferase activity and monomethylates 'Lys-9' of histone H3 (H3K9me1) in vitro. Probably catalyzes the monomethylation of free histone H3 in the cytoplasm which is then transported to the nucleus and incorporated into nucleosomes where SUV39H methyltransferases use it as a substrate to catalyze histone H3 'Lys-9' trimethylation. Likely to be one of the primary histone methyltransferases along with MECOM/PRDM3 that direct cytoplasmic H3K9me1 methylation. Functions in the differentiation of brown adipose tissue (BAT) which is specialized in dissipating chemical energy in the form of heat in response to cold or excess feeding while white adipose tissue (WAT) is specialized in the storage of excess energy and the control of systemic metabolism. Together with CEBPB, regulates the differentiation of myoblastic precursors into brown adipose cells. Functions as a repressor of TGF-beta signaling. The protein is Histone-lysine N-methyltransferase PRDM16 of Mus musculus (Mouse).